Consider the following 535-residue polypeptide: Bifunctional purine biosynthesis protein PurH (535 aa).

The region spanning 6–151 (TRLPIRRALI…KNHKDVAIVV (146 aa)) is the MGS-like domain.

Belongs to the PurH family.

The catalysed reaction is (6R)-10-formyltetrahydrofolate + 5-amino-1-(5-phospho-beta-D-ribosyl)imidazole-4-carboxamide = 5-formamido-1-(5-phospho-D-ribosyl)imidazole-4-carboxamide + (6S)-5,6,7,8-tetrahydrofolate. It catalyses the reaction IMP + H2O = 5-formamido-1-(5-phospho-D-ribosyl)imidazole-4-carboxamide. Its pathway is purine metabolism; IMP biosynthesis via de novo pathway; 5-formamido-1-(5-phospho-D-ribosyl)imidazole-4-carboxamide from 5-amino-1-(5-phospho-D-ribosyl)imidazole-4-carboxamide (10-formyl THF route): step 1/1. It functions in the pathway purine metabolism; IMP biosynthesis via de novo pathway; IMP from 5-formamido-1-(5-phospho-D-ribosyl)imidazole-4-carboxamide: step 1/1. This Pseudomonas paraeruginosa (strain DSM 24068 / PA7) (Pseudomonas aeruginosa (strain PA7)) protein is Bifunctional purine biosynthesis protein PurH.